A 447-amino-acid chain; its full sequence is Protein king tubby (447 aa).

A disordered region spans residues 54 to 84; sequence GSPQNPDQILSNNSSSITMNSSRNNSNNMRS. A compositionally biased stretch (low complexity) spans 62–84; it reads ILSNNSSSITMNSSRNNSNNMRS. S136 carries the post-translational modification Phosphoserine. The span at 168–182 shows a compositional bias: low complexity; the sequence is EGAAMEGSNGAANGS. Residues 168-191 form a disordered region; it reads EGAAMEGSNGAANGSGSVGGSGES.

It belongs to the TUB family.

The protein resides in the cytoplasm. Its subcellular location is the nucleus. It is found in the cell projection. It localises to the cilium membrane. The protein localises to the rhabdomere. This is Protein king tubby from Drosophila grimshawi (Hawaiian fruit fly).